Consider the following 601-residue polypeptide: Uptake hydrogenase large subunit (601 aa).

4 residues coordinate Ni(2+): C74, C77, C580, and C583.

This sequence belongs to the [NiFe]/[NiFeSe] hydrogenase large subunit family. In terms of assembly, heterodimer of a large and a small subunit. Ni(2+) is required as a cofactor.

It is found in the cell membrane. It carries out the reaction H2 + A = AH2. This enzyme recycles the H(2) produced by nitrogenase to increase the production of ATP and to protect nitrogenase against inhibition or damage by O(2) under carbon- or phosphate-limited conditions. This is Uptake hydrogenase large subunit (hupL) from Azotobacter chroococcum mcd 1.